The sequence spans 270 residues: Formamidopyrimidine-DNA glycosylase (270 aa).

Residue proline 2 is the Schiff-base intermediate with DNA of the active site. The active-site Proton donor is the glutamate 3. The active-site Proton donor; for beta-elimination activity is the lysine 58. DNA-binding residues include histidine 91, arginine 110, and arginine 151. The segment at phenylalanine 236–arginine 270 adopts an FPG-type zinc-finger fold. Catalysis depends on arginine 260, which acts as the Proton donor; for delta-elimination activity.

Belongs to the FPG family. As to quaternary structure, monomer. The cofactor is Zn(2+).

The catalysed reaction is Hydrolysis of DNA containing ring-opened 7-methylguanine residues, releasing 2,6-diamino-4-hydroxy-5-(N-methyl)formamidopyrimidine.. The enzyme catalyses 2'-deoxyribonucleotide-(2'-deoxyribose 5'-phosphate)-2'-deoxyribonucleotide-DNA = a 3'-end 2'-deoxyribonucleotide-(2,3-dehydro-2,3-deoxyribose 5'-phosphate)-DNA + a 5'-end 5'-phospho-2'-deoxyribonucleoside-DNA + H(+). Its function is as follows. Involved in base excision repair of DNA damaged by oxidation or by mutagenic agents. Acts as a DNA glycosylase that recognizes and removes damaged bases. Has a preference for oxidized purines, such as 7,8-dihydro-8-oxoguanine (8-oxoG). Has AP (apurinic/apyrimidinic) lyase activity and introduces nicks in the DNA strand. Cleaves the DNA backbone by beta-delta elimination to generate a single-strand break at the site of the removed base with both 3'- and 5'-phosphates. The polypeptide is Formamidopyrimidine-DNA glycosylase (Pseudomonas entomophila (strain L48)).